We begin with the raw amino-acid sequence, 989 residues long: Translation initiation factor IF-2 (989 aa).

Disordered stretches follow at residues 43–219 and 234–379; these read KRRR…LQAR and EARR…GGAR. Polar residues predominate over residues 72 to 87; it reads NTPNKDTAVTQTATKN. The span at 105 to 146 shows a compositional bias: low complexity; that stretch reads PKPVAAEATAQETSKAAPAAAQPVAEKEAAAPASAEAAKSAA. The span at 149-159 shows a compositional bias: basic and acidic residues; it reads VTDRGAKKTTE. Residues 160 to 171 show a composition bias toward polar residues; sequence KNGANASGNRPS. Basic and acidic residues predominate over residues 234–293; the sequence is EARRREDRLKQEADLEEQRRIEEKRRLEAEAKVEAEKQAALKEKEKAEAKARAKAEKEAK. The span at 294-303 shows a compositional bias: low complexity; sequence AAQAKTAGAA. The span at 342–361 shows a compositional bias: basic and acidic residues; that stretch reads PRREAPRPAMRDRKGEDRRQ. A tr-type G domain is found at 489–659; sequence SRPPVVTIMG…LLQAEMLELK (171 aa). The G1 stretch occupies residues 498–505; it reads GHVDHGKT. 498–505 contributes to the GTP binding site; it reads GHVDHGKT. The tract at residues 523–527 is G2; sequence GITQH. Positions 545–548 are G3; the sequence is DTPG. GTP-binding positions include 545 to 549 and 599 to 602; these read DTPGH and NKMD. The G4 stretch occupies residues 599-602; the sequence is NKMD. The tract at residues 635–637 is G5; sequence SAA.

This sequence belongs to the TRAFAC class translation factor GTPase superfamily. Classic translation factor GTPase family. IF-2 subfamily.

The protein localises to the cytoplasm. Functionally, one of the essential components for the initiation of protein synthesis. Protects formylmethionyl-tRNA from spontaneous hydrolysis and promotes its binding to the 30S ribosomal subunits. Also involved in the hydrolysis of GTP during the formation of the 70S ribosomal complex. The chain is Translation initiation factor IF-2 from Zymomonas mobilis subsp. mobilis (strain ATCC 31821 / ZM4 / CP4).